The sequence spans 785 residues: Uncoating factor OPG117 (785 aa).

Residue aspartate 170 is part of the active site. Positions 342 to 469 (TERGDHIVWI…ELMNIINDIQ (128 aa)) are primase. Positions 477–639 (KNRELYEKTL…FSQPSGREAA (163 aa)) constitute an SF3 helicase domain. 503–510 (GETATGKS) is a binding site for ATP.

The protein belongs to the orthopoxvirus OPG117 family. As to quaternary structure, homomultimer; hexamer. Interacts with OPG148.

It localises to the host cytoplasm. Multifunctional protein required for genome uncoating and replication. Major viral uncoating protein that is required for the release of the viral genome from incoming viral cores containing the viral DNA genome. Possesses an ATPase activity that is required for hexamerization and uncoating. The polypeptide is Uncoating factor OPG117 (OPG117) (Bos taurus (Bovine)).